The sequence spans 366 residues: tRNA/tmRNA (uracil-C(5))-methyltransferase (366 aa).

The S-adenosyl-L-methionine site is built by Gln190, Tyr218, Asn223, Glu239, and Asp299. The active-site Nucleophile is the Cys324. The active-site Proton acceptor is Glu358.

This sequence belongs to the class I-like SAM-binding methyltransferase superfamily. RNA M5U methyltransferase family. TrmA subfamily.

The catalysed reaction is uridine(54) in tRNA + S-adenosyl-L-methionine = 5-methyluridine(54) in tRNA + S-adenosyl-L-homocysteine + H(+). It carries out the reaction uridine(341) in tmRNA + S-adenosyl-L-methionine = 5-methyluridine(341) in tmRNA + S-adenosyl-L-homocysteine + H(+). Functionally, dual-specificity methyltransferase that catalyzes the formation of 5-methyluridine at position 54 (m5U54) in all tRNAs, and that of position 341 (m5U341) in tmRNA (transfer-mRNA). This chain is tRNA/tmRNA (uracil-C(5))-methyltransferase, found in Klebsiella pneumoniae subsp. pneumoniae (strain ATCC 700721 / MGH 78578).